Here is a 296-residue protein sequence, read N- to C-terminus: 4-hydroxybenzoate octaprenyltransferase (296 aa).

Helical transmembrane passes span isoleucine 28–isoleucine 48, leucine 51–isoleucine 71, leucine 102–leucine 122, phenylalanine 143–phenylalanine 163, alanine 174–methionine 194, phenylalanine 212–alanine 232, valine 233–leucine 253, and phenylalanine 274–phenylalanine 294.

This sequence belongs to the UbiA prenyltransferase family. Mg(2+) serves as cofactor.

It localises to the cell inner membrane. The catalysed reaction is all-trans-octaprenyl diphosphate + 4-hydroxybenzoate = 4-hydroxy-3-(all-trans-octaprenyl)benzoate + diphosphate. Its pathway is cofactor biosynthesis; ubiquinone biosynthesis. Its function is as follows. Catalyzes the prenylation of para-hydroxybenzoate (PHB) with an all-trans polyprenyl group. Mediates the second step in the final reaction sequence of ubiquinone-8 (UQ-8) biosynthesis, which is the condensation of the polyisoprenoid side chain with PHB, generating the first membrane-bound Q intermediate 3-octaprenyl-4-hydroxybenzoate. The chain is 4-hydroxybenzoate octaprenyltransferase from Neisseria meningitidis serogroup B (strain ATCC BAA-335 / MC58).